Reading from the N-terminus, the 299-residue chain is Nucleotide-binding protein SCO1952 (299 aa).

23–30 contacts ATP; the sequence is GMSGAGRS. 74–77 contacts GTP; the sequence is DVRG.

The protein belongs to the RapZ-like family.

Functionally, displays ATPase and GTPase activities. The polypeptide is Nucleotide-binding protein SCO1952 (Streptomyces coelicolor (strain ATCC BAA-471 / A3(2) / M145)).